Reading from the N-terminus, the 407-residue chain is Peptide chain release factor subunit 1 (407 aa).

It belongs to the eukaryotic release factor 1 family. As to quaternary structure, heterodimer of two subunits, one of which binds GTP.

The protein resides in the cytoplasm. Its function is as follows. Directs the termination of nascent peptide synthesis (translation) in response to the termination codons UAA, UAG and UGA. The chain is Peptide chain release factor subunit 1 (prf1) from Archaeoglobus fulgidus (strain ATCC 49558 / DSM 4304 / JCM 9628 / NBRC 100126 / VC-16).